Here is a 240-residue protein sequence, read N- to C-terminus: Methylthioribulose-1-phosphate dehydratase (240 aa).

Cysteine 99 is a binding site for substrate. Zn(2+) contacts are provided by histidine 116 and histidine 118. The Proton donor/acceptor role is filled by glutamate 145. Residue histidine 201 coordinates Zn(2+).

It belongs to the aldolase class II family. MtnB subfamily. It depends on Zn(2+) as a cofactor.

It localises to the cytoplasm. It catalyses the reaction 5-(methylsulfanyl)-D-ribulose 1-phosphate = 5-methylsulfanyl-2,3-dioxopentyl phosphate + H2O. The protein operates within amino-acid biosynthesis; L-methionine biosynthesis via salvage pathway; L-methionine from S-methyl-5-thio-alpha-D-ribose 1-phosphate: step 2/6. Its function is as follows. Catalyzes the dehydration of methylthioribulose-1-phosphate (MTRu-1-P) into 2,3-diketo-5-methylthiopentyl-1-phosphate (DK-MTP-1-P). This Ajellomyces capsulatus (strain G186AR / H82 / ATCC MYA-2454 / RMSCC 2432) (Darling's disease fungus) protein is Methylthioribulose-1-phosphate dehydratase.